Consider the following 576-residue polypeptide: Acetylcholine receptor subunit alpha-like 2 (576 aa).

A signal peptide spans 1 to 21; the sequence is MAPGCCTTRPRPIALLAHIWR. The Extracellular portion of the chain corresponds to 22–261; the sequence is HCKPLCLLLV…FFNITLRRKT (240 aa). Asparagine 65 carries an N-linked (GlcNAc...) asparagine glycan. Intrachain disulfides connect cysteine 169/cysteine 183 and cysteine 243/cysteine 244. N-linked (GlcNAc...) asparagine glycosylation is present at asparagine 254. Transmembrane regions (helical) follow at residues 262-285, 293-311, and 327-346; these read LFYT…VFYL, IALC…LLIS, and YLLF…IIIL. Over 347–526 the chain is Cytoplasmic; the sequence is NIHYRKPSTH…WGFVAMVMDR (180 aa). Residues 527–545 form a helical membrane-spanning segment; it reads LFLWLFMIASLVGTFVILG. Asparagine 570 is a glycosylation site (N-linked (GlcNAc...) asparagine).

The protein belongs to the ligand-gated ion channel (TC 1.A.9) family. Acetylcholine receptor (TC 1.A.9.1) subfamily. As to expression, CNS in embryos.

The protein localises to the postsynaptic cell membrane. The protein resides in the cell membrane. In terms of biological role, after binding acetylcholine, the AChR responds by an extensive change in conformation that affects all subunits and leads to opening of an ion-conducting channel across the plasma membrane. This chain is Acetylcholine receptor subunit alpha-like 2 (nAChRalpha2), found in Drosophila melanogaster (Fruit fly).